A 187-amino-acid polypeptide reads, in one-letter code: Ribosome-recycling factor (187 aa).

Belongs to the RRF family.

It is found in the cytoplasm. Functionally, responsible for the release of ribosomes from messenger RNA at the termination of protein biosynthesis. May increase the efficiency of translation by recycling ribosomes from one round of translation to another. The sequence is that of Ribosome-recycling factor from Rhodopseudomonas palustris (strain BisB18).